Consider the following 238-residue polypeptide: DNA damage-regulated autophagy modulator protein 1 (238 aa).

A run of 6 helical transmembrane segments spans residues 9–29, 53–73, 91–111, 116–136, 161–181, and 200–220; these read AFVP…SYVV, SGIF…TMYT, VFNL…GIVA, LAVP…GVVY, MAIS…ASLI, and VSAI…LTFI.

The protein belongs to the DRAM/TMEM150 family.

The protein resides in the lysosome membrane. Lysosomal modulator of autophagy that plays a central role in p53/TP53-mediated apoptosis. Not involved in p73/TP73-mediated autophagy. The polypeptide is DNA damage-regulated autophagy modulator protein 1 (Dram1) (Mus musculus (Mouse)).